The sequence spans 467 residues: Dihydroorotase (467 aa).

The Zn(2+) site is built by His60 and His62. Substrate contacts are provided by residues 62–64 (HFR) and Asn94. 4 residues coordinate Zn(2+): Glu146, His180, His234, and Asp313. Asp313 is a catalytic residue. Residue His317 participates in substrate binding. The segment at 439–467 (KPGRGEFLEGSGKRSEEDEEENSEETGSD) is disordered. Residues 441–454 (GRGEFLEGSGKRSE) show a composition bias toward basic and acidic residues. Positions 455 to 467 (EDEEENSEETGSD) are enriched in acidic residues.

The protein belongs to the metallo-dependent hydrolases superfamily. DHOase family. Class I DHOase subfamily. Zn(2+) serves as cofactor.

It carries out the reaction (S)-dihydroorotate + H2O = N-carbamoyl-L-aspartate + H(+). Its pathway is pyrimidine metabolism; UMP biosynthesis via de novo pathway; (S)-dihydroorotate from bicarbonate: step 3/3. Functionally, catalyzes the reversible cyclization of carbamoyl aspartate to dihydroorotate. This chain is Dihydroorotase, found in Methanosarcina acetivorans (strain ATCC 35395 / DSM 2834 / JCM 12185 / C2A).